A 145-amino-acid chain; its full sequence is MTVHNLYLFDRNGVCLHYSEWHRKKQAGIPKEEEYKLMYGMLFSIRSFVSKMSPLDMKDGFLSFQTSRYKLHYYETPTGIKVVMNTDLGVGPIRDVLHHIYSALYVEFVVKNPLCPLGQTVQSELFRSRLDSYVRSLPFFSARAG.

It belongs to the TRAPP small subunits family. BET5 subfamily. Part of the multisubunit transport protein particle (TRAPP) complex. The heterodimer TRAPPC6B-TRAPPC3 interacts with TRAPPC1 likely providing a core for TRAPP complex formation.

The protein localises to the golgi apparatus. It is found in the cis-Golgi network. It localises to the endoplasmic reticulum. May play a role in vesicular transport from endoplasmic reticulum to Golgi. The sequence is that of Trafficking protein particle complex subunit 1 from Mus musculus (Mouse).